We begin with the raw amino-acid sequence, 390 residues long: tRNA(Met) cytidine acetate ligase (390 aa).

Residues 7-20 (ITEY…HIYH), G101, N152, and R177 each bind ATP.

This sequence belongs to the TmcAL family.

It is found in the cytoplasm. The enzyme catalyses cytidine(34) in elongator tRNA(Met) + acetate + ATP = N(4)-acetylcytidine(34) in elongator tRNA(Met) + AMP + diphosphate. Its function is as follows. Catalyzes the formation of N(4)-acetylcytidine (ac(4)C) at the wobble position of elongator tRNA(Met), using acetate and ATP as substrates. First activates an acetate ion to form acetyladenylate (Ac-AMP) and then transfers the acetyl group to tRNA to form ac(4)C34. This is tRNA(Met) cytidine acetate ligase from Leuconostoc mesenteroides subsp. mesenteroides (strain ATCC 8293 / DSM 20343 / BCRC 11652 / CCM 1803 / JCM 6124 / NCDO 523 / NBRC 100496 / NCIMB 8023 / NCTC 12954 / NRRL B-1118 / 37Y).